Reading from the N-terminus, the 119-residue chain is Small ribosomal subunit protein uS10 (119 aa).

This sequence belongs to the universal ribosomal protein uS10 family. In terms of assembly, component of the 40S small ribosomal subunit.

Its subcellular location is the cytoplasm. In terms of biological role, component of the small ribosomal subunit. The ribosome is a large ribonucleoprotein complex responsible for the synthesis of proteins in the cell. This chain is Small ribosomal subunit protein uS10 (rps20), found in Xenopus laevis (African clawed frog).